The primary structure comprises 418 residues: Histidinol dehydrogenase (418 aa).

3 residues coordinate NAD(+): tyrosine 119, glutamine 180, and asparagine 203. 3 residues coordinate substrate: threonine 226, glutamine 248, and histidine 251. Zn(2+) is bound by residues glutamine 248 and histidine 251. Residues glutamate 316 and histidine 317 each act as proton acceptor in the active site. Residues histidine 317, aspartate 350, glutamate 404, and histidine 409 each contribute to the substrate site. Position 350 (aspartate 350) interacts with Zn(2+). Histidine 409 provides a ligand contact to Zn(2+).

Belongs to the histidinol dehydrogenase family. Requires Zn(2+) as cofactor.

The enzyme catalyses L-histidinol + 2 NAD(+) + H2O = L-histidine + 2 NADH + 3 H(+). The protein operates within amino-acid biosynthesis; L-histidine biosynthesis; L-histidine from 5-phospho-alpha-D-ribose 1-diphosphate: step 9/9. In terms of biological role, catalyzes the sequential NAD-dependent oxidations of L-histidinol to L-histidinaldehyde and then to L-histidine. The chain is Histidinol dehydrogenase from Staphylococcus aureus (strain MSSA476).